Here is a 168-residue protein sequence, read N- to C-terminus: NADH-ubiquinone oxidoreductase chain 6 (168 aa).

The next 5 membrane-spanning stretches (helical) occupy residues 1-21, 27-47, 50-70, 87-107, and 143-163; these read MKMM…VAFA, IYGG…VVSL, VFLG…VFGY, VVAF…YFMS, and WALA…LEVV.

It belongs to the complex I subunit 6 family. Core subunit of respiratory chain NADH dehydrogenase (Complex I) which is composed of 45 different subunits.

Its subcellular location is the mitochondrion inner membrane. The catalysed reaction is a ubiquinone + NADH + 5 H(+)(in) = a ubiquinol + NAD(+) + 4 H(+)(out). Functionally, core subunit of the mitochondrial membrane respiratory chain NADH dehydrogenase (Complex I) which catalyzes electron transfer from NADH through the respiratory chain, using ubiquinone as an electron acceptor. Essential for the catalytic activity and assembly of complex I. In Didelphis virginiana (North American opossum), this protein is NADH-ubiquinone oxidoreductase chain 6 (MT-ND6).